The chain runs to 214 residues: MSQLHAVPGRTKKLPPLRVGVGGPVGSGKTTLVEMLCKTMRERWDLVVVTNDIYTKEDQRLLTVAGALEPERIIGVETGGCPHTAIREDASINLEAVDRMLEKFPNADIVFIESGGDNLAATFSPELSDLTIYVIDVAAGEKIPRKGGPGITKSDLFVINKTDLAPHVGADLSVMEADTRRMRPNRPFVMSNLKTRQGLDEVIRFIETKGLLVG.

The disordered stretch occupies residues 1–20 (MSQLHAVPGRTKKLPPLRVG). 23-30 (GPVGSGKT) is a GTP binding site.

Belongs to the SIMIBI class G3E GTPase family. UreG subfamily. Homodimer. UreD, UreF and UreG form a complex that acts as a GTP-hydrolysis-dependent molecular chaperone, activating the urease apoprotein by helping to assemble the nickel containing metallocenter of UreC. The UreE protein probably delivers the nickel.

The protein resides in the cytoplasm. In terms of biological role, facilitates the functional incorporation of the urease nickel metallocenter. This process requires GTP hydrolysis, probably effectuated by UreG. In Leptothrix cholodnii (strain ATCC 51168 / LMG 8142 / SP-6) (Leptothrix discophora (strain SP-6)), this protein is Urease accessory protein UreG.